We begin with the raw amino-acid sequence, 253 residues long: MRILLSNDDGVHAPGIQTLAKALREFADVQVVAPDRNRSGASNSLTLESSLRTFTFENGDIAVQMGTPTDCVYLGVNALMRPRPDIVVSGINAGPNLGDDVIYSGTVAAAMEGRHLGFPALAVSLDGHKHYDTAAAVTCSILRALCKEPLRTGRILNINVPDLPLDQIKGIRVTRCGTRHPADKVIPQQDPRGNTLYWIGPPGGKCDAGPGTDFAAVDEGYVSITPLHVDLTAHSAQDVVSDWLNSVGVGTQW.

The a divalent metal cation site is built by Asp8, Asp9, Ser39, and Asn92.

Belongs to the SurE nucleotidase family. The cofactor is a divalent metal cation.

Its subcellular location is the cytoplasm. It catalyses the reaction a ribonucleoside 5'-phosphate + H2O = a ribonucleoside + phosphate. The catalysed reaction is a ribonucleoside 3'-phosphate + H2O = a ribonucleoside + phosphate. The enzyme catalyses [phosphate](n) + H2O = [phosphate](n-1) + phosphate + H(+). Its function is as follows. Nucleotidase with a broad substrate specificity as it can dephosphorylate various ribo- and deoxyribonucleoside 5'-monophosphates and ribonucleoside 3'-monophosphates with highest affinity to 3'-AMP. Also hydrolyzes polyphosphate (exopolyphosphatase activity) with the preference for short-chain-length substrates (P20-25). Might be involved in the regulation of dNTP and NTP pools, and in the turnover of 3'-mononucleotides produced by numerous intracellular RNases (T1, T2, and F) during the degradation of various RNAs. This is 5'/3'-nucleotidase SurE from Escherichia coli O17:K52:H18 (strain UMN026 / ExPEC).